A 416-amino-acid polypeptide reads, in one-letter code: Transcription factor LATE FLOWERING (416 aa).

Composition is skewed to low complexity over residues 176-186 (STTTTTTALPP) and 200-212 (TSPTTKTTTTSET). Disordered stretches follow at residues 176 to 226 (STTT…AGGS) and 276 to 311 (LGGPASASDPSSRPPPPPQRPRRKNVRISSDPQTVA). Positions 303–316 (ISSDPQTVAARLRR) are basic motif; degenerate. A bHLH domain is found at 303–352 (ISSDPQTVAARLRRERVSERLRVLQRLVPGGSKMDTATMLDEAASYLKFL). The tract at residues 317-352 (ERVSERLRVLQRLVPGGSKMDTATMLDEAASYLKFL) is helix-loop-helix motif.

The protein belongs to the bHLH protein family. In terms of assembly, interacts with PIL13 and PIL15.

The protein resides in the nucleus. In terms of biological role, transcription factor involved in the negative regulation of flowering. May be involved in the repression of the flowering factor GI and HD1 by interacting with PIL13 and PIL15 and competing with PRR1. Possesses transactivation activity in yeast. The chain is Transcription factor LATE FLOWERING from Oryza sativa subsp. japonica (Rice).